A 2104-amino-acid polypeptide reads, in one-letter code: Transmembrane matrix receptor MUP-4 (2104 aa).

The first 15 residues, 1–15, serve as a signal peptide directing secretion; the sequence is MRWVPLVLLPLIASA. Topologically, residues 16–1860 are extracellular; that stretch reads ATTYQHRQTY…FCETAPSNLP (1845 aa). 3 EGF-like domains span residues 71–110, 122–163, and 175–213; these read VVNECARPSLNACHKDAQCVDLAEGYTCRCNSGFADTSPD, TTNE…VSTS, and SVNECTNGEADCSNNADCFDRADGYECKCRPGFVDASPN. 6 disulfide bridges follow: Cys75-Cys89, Cys83-Cys98, Cys126-Cys142, Cys136-Cys151, Cys179-Cys192, and Cys186-Cys201. The WR1 domain occupies 220–265; sequence RVCNKPKAPEYYGQQSRQPQCSEGSGCGPNEECRFNTAGEKVCQCR. 3 consecutive EGF-like domains span residues 278-315, 327-360, and 377-416; these read VFSQCEQANECDRNAFCSNTYDGPKCQCKDGFLDVSPD, VRNECADGSHDCSHQAACQDTPTGYICSCNSNCI, and AANQCSDKSLNSCDENADCVQLPDGYTCKCFAGYVDVSSN. 7 cysteine pairs are disulfide-bonded: Cys282–Cys294, Cys288–Cys303, Cys331–Cys344, Cys338–Cys353, Cys355–Cys359, Cys381–Cys395, and Cys389–Cys404. The VWFA domain occupies 437 to 612; sequence DLVFLIDGSG…DLNTRLRSAI (176 aa). 2 N-linked (GlcNAc...) asparagine glycosylation sites follow: Asn494 and Asn556. EGF-like domains follow at residues 728–772 and 819–857; these read SNDE…NKCE and LIDECAAGVADCDPNAKCTDTDESYICTCNEGFLDKSPE. 21 disulfide bridges follow: Cys732–Cys746, Cys740–Cys756, Cys758–Cys771, Cys823–Cys836, Cys830–Cys845, Cys873–Cys886, Cys880–Cys895, Cys923–Cys937, Cys931–Cys946, Cys972–Cys985, Cys979–Cys995, Cys1020–Cys1034, Cys1028–Cys1046, Cys1075–Cys1089, Cys1083–Cys1098, Cys1125–Cys1139, Cys1133–Cys1148, Cys1173–Cys1187, Cys1181–Cys1196, Cys1219–Cys1233, and Cys1227–Cys1242. An EGF-like 9; calcium-binding domain is found at 869–907; that stretch reads QRNECLDGTHNCSMNADCIDLPDGFLCRCKEDFVDISPN. A glycan (N-linked (GlcNAc...) asparagine) is linked at Asn879. EGF-like domains lie at 919–958, 968–1007, 1016–1058, 1071–1110, 1121–1160, 1169–1208, and 1215–1254; these read LVNECLITGGHNCHEHAICIDTRDSYKCQCKEGYVDHDEL, LNQICESGKHECDKNARCVEKGANDYECVCNAGFIDKSPL, VEPI…VGAV, LVNECLSASLNSCDAAATCIDLDDGYTCKCPLGSKDESPV, LVNECNIPHLNNCSHFATCIDLEEGYECKCKPEYHDQKPE, IINECLAENLNDCSPNAMCIDKIDGYDCKCKAPFQDEMPS, and RFDECADPKDNDCDKHALCIDTDDSYTCQCKEGFFDEISD. Asn1037 is a glycosylation site (N-linked (GlcNAc...) asparagine). N-linked (GlcNAc...) asparagine glycosylation is present at Asn1132. Asn1271, Asn1403, and Asn1576 each carry an N-linked (GlcNAc...) asparagine glycan. SEA domains are found at residues 1322-1444 and 1495-1620; these read PTTS…DDAD and AVES…PEQL. EGF-like domains lie at 1622-1658, 1669-1705, and 1717-1754; these read PFSNCYHSDCHPDAICKEVGKGYTCTCPDGFRDLNPS, GVNECEKPELNECSPHARCIDLDYLYKCECIRPYVNS, and SIDYCQDVNYCPLNSTCVNVDEQARCDCKPGFVDLRKS. Intrachain disulfides connect Cys1626–Cys1637, Cys1631–Cys1646, Cys1673–Cys1687, Cys1681–Cys1696, Cys1721–Cys1733, Cys1727–Cys1742, Cys1776–Cys1789, Cys1783–Cys1798, Cys1821–Cys1830, Cys1824–Cys1841, and Cys1843–Cys1852. 2 N-linked (GlcNAc...) asparagine glycosylation sites follow: Asn1730 and Asn1782. The EGF-like 20; calcium-binding domain occupies 1772 to 1810; that stretch reads DIDECALGLHNCSAAAICIDKKIGYECQCQEGYEDGNPS. The EGF-like 21 domain occupies 1817 to 1853; that stretch reads AASLCGLCNGHGDCIHDALSSNVTCACLDGYTGQFCE. Asn1838 carries an N-linked (GlcNAc...) asparagine glycan. Residues 1861–1881 traverse the membrane as a helical segment; the sequence is LILMTLLALLFLLLTLLCCLY. Residues 1882–2104 lie on the Cytoplasmic side of the membrane; sequence MCARCRCFGA…TTKAEEVNYF (223 aa). Residues 2031–2040 are compositionally biased toward low complexity; that stretch reads SGAMMSSASG. The disordered stretch occupies residues 2031-2104; that stretch reads SGAMMSSASG…TTKAEEVNYF (74 aa). Composition is skewed to basic and acidic residues over residues 2062-2076 and 2083-2104; these read VYDRTTRTNQSHDFE and TGTERSKREFVTTTKAEEVNYF.

In terms of tissue distribution, abundant at hypodermal cell-matrix junctions overlying muscle of threefold embryos. Expression continues in body wall muscle in larvae and adults and is also detected in other regions where cells show mechanical attachment to the hypodermis including the inner surface of the pharynx, overlying anal and intestinal muscles, overlying vulval and uterine sex muscles, male tail muscle attachment zones and the six mechanosensory neurons (at protein level).

Its subcellular location is the cell junction. It is found in the hemidesmosome. The protein localises to the cytoplasm. The protein resides in the cytoskeleton. It localises to the cell membrane. Its function is as follows. Required for junctional attachments between hypodermis and muscle, and between the apical epithelial surface and the cuticular matrix. Essential for enclosure of the embryo by the hypodermis, hypodermal integrity, embryo elongation, and maintenance of hypodermal morphology in fully elongated embryos. The sequence is that of Transmembrane matrix receptor MUP-4 from Caenorhabditis elegans.